A 165-amino-acid polypeptide reads, in one-letter code: Chaperone protein SicA (165 aa).

The protein belongs to the LcrH/SycD chaperone family. As to quaternary structure, dimer or higher-order oligomers.

It is found in the cytoplasm. Type III secretion-associated chaperone required for SipB and SipC stabilization. Prevents premature association of SipB with SipC, which may lead to their targeting for degradation. Along with InvF, required for transcription activation of sigDE (sopB pipC), sicAsipBCDA, and sopE. This chain is Chaperone protein SicA (sicA), found in Salmonella dublin.